A 103-amino-acid chain; its full sequence is Sec-independent protein translocase protein TatA (103 aa).

A helical membrane pass occupies residues 1–21 (MGNIFSPTHLIVILLIIIVLF). The tract at residues 77 to 103 (KRATTRVKGSSSSRKGKTSVVKKQRVK) is disordered. Residues 90 to 103 (RKGKTSVVKKQRVK) are compositionally biased toward basic residues.

The protein belongs to the TatA/E family. As to quaternary structure, the Tat system comprises two distinct complexes: a TatABC complex, containing multiple copies of TatA, TatB and TatC subunits, and a separate TatA complex, containing only TatA subunits. Substrates initially bind to the TatABC complex, which probably triggers association of the separate TatA complex to form the active translocon.

The protein localises to the cell inner membrane. Functionally, part of the twin-arginine translocation (Tat) system that transports large folded proteins containing a characteristic twin-arginine motif in their signal peptide across membranes. TatA could form the protein-conducting channel of the Tat system. The chain is Sec-independent protein translocase protein TatA from Bartonella henselae (strain ATCC 49882 / DSM 28221 / CCUG 30454 / Houston 1) (Rochalimaea henselae).